We begin with the raw amino-acid sequence, 438 residues long: Phosphoribosylamine--glycine ligase (438 aa).

The region spanning 107-319 is the ATP-grasp domain; sequence RKLFEDYDIP…LAKISKQIVD (213 aa). 134–197 contacts ATP; sequence IDNFDEPVVV…EELLLGEEYT (64 aa). Mg(2+) is bound by residues glutamine 277, glutamate 289, and asparagine 291. The Mn(2+) site is built by glutamine 277, glutamate 289, and asparagine 291.

This sequence belongs to the GARS family. Mg(2+) is required as a cofactor. Mn(2+) serves as cofactor.

The enzyme catalyses 5-phospho-beta-D-ribosylamine + glycine + ATP = N(1)-(5-phospho-beta-D-ribosyl)glycinamide + ADP + phosphate + H(+). It functions in the pathway purine metabolism; IMP biosynthesis via de novo pathway; N(1)-(5-phospho-D-ribosyl)glycinamide from 5-phospho-alpha-D-ribose 1-diphosphate: step 2/2. The chain is Phosphoribosylamine--glycine ligase from Methanosphaera stadtmanae (strain ATCC 43021 / DSM 3091 / JCM 11832 / MCB-3).